A 387-amino-acid polypeptide reads, in one-letter code: Protochlorophyllide reductase A, chloroplastic (387 aa).

A chloroplast-targeting transit peptide spans 1–35 (MALQVQAALLPSALSVPKKGNLSAVVKEPGFLSVS).

This sequence belongs to the short-chain dehydrogenases/reductases (SDR) family. POR subfamily.

Its subcellular location is the plastid. It is found in the chloroplast. The enzyme catalyses chlorophyllide a + NADP(+) = protochlorophyllide a + NADPH + H(+). The protein operates within porphyrin-containing compound metabolism; chlorophyll biosynthesis. Its function is as follows. Phototransformation of protochlorophyllide (Pchlide) to chlorophyllide (Chlide). The protein is Protochlorophyllide reductase A, chloroplastic (PORA) of Oryza sativa subsp. japonica (Rice).